A 316-amino-acid polypeptide reads, in one-letter code: N-acetylmuramic acid 6-phosphate etherase (316 aa).

Residues 1–24 (MTRFQSDAAVSADRGHLMTEQPNP) form a disordered region. Residues 66 to 229 (IASRLKDGGR…STAVMVRLGK (164 aa)) form the SIS domain. Catalysis depends on glutamate 94, which acts as the Proton donor. The active site involves glutamate 125.

This sequence belongs to the GCKR-like family. MurNAc-6-P etherase subfamily. In terms of assembly, homodimer.

The catalysed reaction is N-acetyl-D-muramate 6-phosphate + H2O = N-acetyl-D-glucosamine 6-phosphate + (R)-lactate. The protein operates within amino-sugar metabolism; N-acetylmuramate degradation. Its function is as follows. Specifically catalyzes the cleavage of the D-lactyl ether substituent of MurNAc 6-phosphate, producing GlcNAc 6-phosphate and D-lactate. The chain is N-acetylmuramic acid 6-phosphate etherase from Parasynechococcus marenigrum (strain WH8102).